A 45-amino-acid chain; its full sequence is Large ribosomal subunit protein bL36 (45 aa).

Belongs to the bacterial ribosomal protein bL36 family.

The protein is Large ribosomal subunit protein bL36 of Psychrobacter sp. (strain PRwf-1).